Here is an 86-residue protein sequence, read N- to C-terminus: UPF0297 protein SSP1144 (86 aa).

The protein belongs to the UPF0297 family.

In Staphylococcus saprophyticus subsp. saprophyticus (strain ATCC 15305 / DSM 20229 / NCIMB 8711 / NCTC 7292 / S-41), this protein is UPF0297 protein SSP1144.